We begin with the raw amino-acid sequence, 85 residues long: 4-hydroxyphenylacetate decarboxylase small subunit (85 aa).

[4Fe-4S] cluster-binding residues include His4, Cys7, Cys20, Cys34, Cys43, Cys46, Cys60, and Cys78.

This sequence belongs to the HPA decarboxylase small subunit family. In terms of assembly, heterooctamer consisting of 4 large (HpdB) subunits and 4 small (HpdC) subunits, arranged as a tetramer of heterodimers. The cofactor is [4Fe-4S] cluster.

The enzyme catalyses 4-hydroxyphenylacetate + H(+) = 4-methylphenol + CO2. The catalysed reaction is 3,4-dihydroxyphenylacetate + H(+) = 4-methylcatechol + CO2. Its function is as follows. Component of the HPA decarboxylase that decarboxylates phenylacetates with a hydroxyl group in the p-position. Active toward 4-hydroxyphenylacetate and 3,4-dihydroxyphenylacetate, forming 4-methylphenol and 4-methylcatechol, respectively. Is likely involved in the catabolism of aromatic amino acids such as tyrosine fermentation. 4-methylphenol (p-cresol) formation provides metabolic toxicity, which allows an active suppression of other microbes and may provide growth advantages for the producers in highly competitive environments. The small subunit is essential for enzymatic activity of HPA decarboxylase, and also seems to be involved in the regulation of the enzyme oligomeric state and catalytic activity. In Clostridioides difficile (strain 630) (Peptoclostridium difficile), this protein is 4-hydroxyphenylacetate decarboxylase small subunit.